Consider the following 686-residue polypeptide: Eukaryotic translation initiation factor 3 subunit B (686 aa).

Residues methionine 1 to aspartate 29 form a disordered region. Over residues asparagine 11–phenylalanine 21 the composition is skewed to acidic residues. In terms of domain architecture, RRM spans serine 53–aspartate 137. WD repeat units lie at residues threonine 203–lysine 242, aspartate 289–leucine 327, isoleucine 330–glutamate 365, glutamate 438–leucine 480, and proline 526–threonine 571. Residues alanine 590–isoleucine 642 adopt a coiled-coil conformation.

The protein belongs to the eIF-3 subunit B family. As to quaternary structure, component of the eukaryotic translation initiation factor 3 (eIF-3) complex. The eIF-3 complex interacts with pix. Interacts with mxt.

The protein resides in the cytoplasm. RNA-binding component of the eukaryotic translation initiation factor 3 (eIF-3) complex, which is involved in protein synthesis of a specialized repertoire of mRNAs and, together with other initiation factors, stimulates binding of mRNA and methionyl-tRNAi to the 40S ribosome. The eIF-3 complex specifically targets and initiates translation of a subset of mRNAs involved in cell proliferation. The protein is Eukaryotic translation initiation factor 3 subunit B of Drosophila ananassae (Fruit fly).